Reading from the N-terminus, the 110-residue chain is Large ribosomal subunit protein uL22 (110 aa).

Belongs to the universal ribosomal protein uL22 family. Part of the 50S ribosomal subunit.

In terms of biological role, this protein binds specifically to 23S rRNA; its binding is stimulated by other ribosomal proteins, e.g. L4, L17, and L20. It is important during the early stages of 50S assembly. It makes multiple contacts with different domains of the 23S rRNA in the assembled 50S subunit and ribosome. Its function is as follows. The globular domain of the protein is located near the polypeptide exit tunnel on the outside of the subunit, while an extended beta-hairpin is found that lines the wall of the exit tunnel in the center of the 70S ribosome. This is Large ribosomal subunit protein uL22 from Klebsiella pneumoniae (strain 342).